A 270-amino-acid chain; its full sequence is Formamidopyrimidine-DNA glycosylase (270 aa).

Proline 2 acts as the Schiff-base intermediate with DNA in catalysis. Catalysis depends on glutamate 3, which acts as the Proton donor. The Proton donor; for beta-elimination activity role is filled by lysine 57. Residues histidine 90, arginine 109, and lysine 151 each contribute to the DNA site. The segment at arginine 236 to lysine 270 adopts an FPG-type zinc-finger fold. Arginine 260 acts as the Proton donor; for delta-elimination activity in catalysis.

It belongs to the FPG family. Monomer. Zn(2+) is required as a cofactor.

The catalysed reaction is Hydrolysis of DNA containing ring-opened 7-methylguanine residues, releasing 2,6-diamino-4-hydroxy-5-(N-methyl)formamidopyrimidine.. It catalyses the reaction 2'-deoxyribonucleotide-(2'-deoxyribose 5'-phosphate)-2'-deoxyribonucleotide-DNA = a 3'-end 2'-deoxyribonucleotide-(2,3-dehydro-2,3-deoxyribose 5'-phosphate)-DNA + a 5'-end 5'-phospho-2'-deoxyribonucleoside-DNA + H(+). Functionally, involved in base excision repair of DNA damaged by oxidation or by mutagenic agents. Acts as a DNA glycosylase that recognizes and removes damaged bases. Has a preference for oxidized purines, such as 7,8-dihydro-8-oxoguanine (8-oxoG). Has AP (apurinic/apyrimidinic) lyase activity and introduces nicks in the DNA strand. Cleaves the DNA backbone by beta-delta elimination to generate a single-strand break at the site of the removed base with both 3'- and 5'-phosphates. The polypeptide is Formamidopyrimidine-DNA glycosylase (Pseudoalteromonas atlantica (strain T6c / ATCC BAA-1087)).